The chain runs to 36 residues: Photosystem I reaction center subunit VIII (36 aa).

Residues 9–29 (ILVPLVGLIFPAFSMALFFLY) traverse the membrane as a helical segment.

It belongs to the PsaI family.

The protein localises to the plastid. Its subcellular location is the chloroplast thylakoid membrane. In terms of biological role, may help in the organization of the PsaL subunit. This is Photosystem I reaction center subunit VIII from Thalassiosira pseudonana (Marine diatom).